The chain runs to 1280 residues: Papilin (1280 aa).

The N-terminal stretch at 1–20 (MQLFPLLFSLLLTSTPGSWA) is a signal peptide. 5 TSP type-1 domains span residues 27 to 81 (SDTW…ESCP), 305 to 362 (RGFS…QPCP), 363 to 422 (KTKR…ACNL), 424 to 482 (HCAV…EACP), and 485 to 540 (RGQA…QPCH). Disulfide bonds link C39–C75, C43–C80, and C54–C65. 3 cysteine pairs are disulfide-bonded: C425–C464, C436–C476, and C440–C481. Disordered stretches follow at residues 541–626 (LPQE…DCRH) and 672–715 (PQQA…PSEC). Residues 585–599 (AQSNPREGQDPNLSS) show a composition bias toward polar residues. Residues 706–715 (QAHEGEPSEC) show a composition bias toward basic and acidic residues. Disulfide bonds link C750–C800, C759–C783, and C775–C796. Residues 750–800 (CLLPSAQGSCGDWAARWYFVASVGRCNRFWYGGCHGNANNFASEQECMNTC) enclose the BPTI/Kunitz inhibitor domain. Residues 800 to 902 (CRGQHGPRRP…AVPPTHSPSY (103 aa)) are disordered. Residues 879-891 (IRPRVPGLDREAR) show a composition bias toward basic and acidic residues. An Ig-like C2-type 1 domain is found at 900–990 (PSYRIRLAGS…EPQEIQLRVT (91 aa)). C926 and C973 are joined by a disulfide. A compositionally biased stretch (basic and acidic residues) spans 1002–1012 (PRHFPEPRNPD). Residues 1002–1042 (PRHFPEPRNPDLGHGPPHRGTGAEAGGHRVLSPSHPRPATR) are disordered. 2 consecutive Ig-like C2-type domains span residues 1039 to 1128 (PATR…VQLR) and 1133 to 1218 (LTIT…TEVK). Intrachain disulfides connect C1065/C1112 and C1154/C1202. The region spanning 1231-1270 (LGKDCIDQPELANCALILQAQLCGNEYYSSFCCASCSRFQ) is the PLAC domain.

Belongs to the papilin family.

It is found in the secreted. This is Papilin (Papln) from Mus musculus (Mouse).